We begin with the raw amino-acid sequence, 259 residues long: Dickkopf-related protein 2 (259 aa).

The signal sequence occupies residues 1–33; it reads MAALMRVKDSSRCLLLLAAVLMVESSQLGSSRA. Positions 42 to 70 are disordered; that stretch reads LGGETPAQSANRSAGMNQGLAFGGSKKGK. Positions 47-57 are enriched in polar residues; that stretch reads PAQSANRSAGM. Asparagine 52 carries an N-linked (GlcNAc...) asparagine glycan. Residues 78-127 are DKK-type Cys-1; it reads CSSDKECEVGRYCHSPHQGSSACMLCRRKKKRCHRDGMCCPGTRCNNGIC. Intrachain disulfides connect cysteine 183-cysteine 195, cysteine 189-cysteine 204, cysteine 194-cysteine 231, cysteine 214-cysteine 239, and cysteine 233-cysteine 256. Residues 183-256 are DKK-type Cys-2; the sequence is CLRSSDCIDG…YSSKARLHVC (74 aa).

Belongs to the dickkopf family. Interacts with LRP5 and LRP6. Post-translationally, may be proteolytically processed by a furin-like protease.

It is found in the secreted. Its function is as follows. Antagonizes canonical Wnt signaling by inhibiting LRP5/6 interaction with Wnt and by forming a ternary complex with the transmembrane protein KREMEN that promotes internalization of LRP5/6. DKKs play an important role in vertebrate development, where they locally inhibit Wnt regulated processes such as antero-posterior axial patterning, limb development, somitogenesis and eye formation. In the adult, Dkks are implicated in bone formation and bone disease, cancer and Alzheimer disease. The chain is Dickkopf-related protein 2 from Mus musculus (Mouse).